A 785-amino-acid chain; its full sequence is Endonuclease MutS2 (785 aa).

Position 335 to 342 (335 to 342) interacts with ATP; that stretch reads GPNTGGKT. The Smr domain maps to 710–785; it reads LDLRGERYED…GNGVTIVEFK (76 aa).

The protein belongs to the DNA mismatch repair MutS family. MutS2 subfamily. Homodimer. Binds to stalled ribosomes, contacting rRNA.

Endonuclease that is involved in the suppression of homologous recombination and thus may have a key role in the control of bacterial genetic diversity. In terms of biological role, acts as a ribosome collision sensor, splitting the ribosome into its 2 subunits. Detects stalled/collided 70S ribosomes which it binds and splits by an ATP-hydrolysis driven conformational change. Acts upstream of the ribosome quality control system (RQC), a ribosome-associated complex that mediates the extraction of incompletely synthesized nascent chains from stalled ribosomes and their subsequent degradation. Probably generates substrates for RQC. The sequence is that of Endonuclease MutS2 from Listeria monocytogenes serotype 4a (strain HCC23).